Consider the following 75-residue polypeptide: UPF0352 protein VP2129 (75 aa).

It belongs to the UPF0352 family.

This chain is UPF0352 protein VP2129, found in Vibrio parahaemolyticus serotype O3:K6 (strain RIMD 2210633).